The following is a 394-amino-acid chain: Elongation factor Tu (394 aa).

The region spanning 10 to 204 (KPHINIGTIG…AVDDNIPTPE (195 aa)) is the tr-type G domain. Residues 19–26 (GHVDHGKT) form a G1 region. 19-26 (GHVDHGKT) is a GTP binding site. Thr-26 serves as a coordination point for Mg(2+). The G2 stretch occupies residues 60–64 (GITIN). The tract at residues 81–84 (DCPG) is G3. GTP-binding positions include 81–85 (DCPGH) and 136–139 (NKID). The tract at residues 136–139 (NKID) is G4. The G5 stretch occupies residues 174-176 (SAL).

Belongs to the TRAFAC class translation factor GTPase superfamily. Classic translation factor GTPase family. EF-Tu/EF-1A subfamily. In terms of assembly, monomer.

The protein resides in the cytoplasm. It carries out the reaction GTP + H2O = GDP + phosphate + H(+). In terms of biological role, GTP hydrolase that promotes the GTP-dependent binding of aminoacyl-tRNA to the A-site of ribosomes during protein biosynthesis. In Chlamydia felis (strain Fe/C-56) (Chlamydophila felis), this protein is Elongation factor Tu.